The sequence spans 869 residues: Serendipity locus protein H-1 (869 aa).

The segment covering 1–17 (MEGGKGEGKRMKEEAPS) has biased composition (basic and acidic residues). Disordered regions lie at residues 1–32 (MEGG…AGTP) and 134–165 (FSVT…TPVK). A compositionally biased stretch (polar residues) spans 146–164 (AFTNSPFKKTSSSGTSTPV). 8 consecutive C2H2-type zinc fingers follow at residues 269–293 (HKCL…AAAH), 299–321 (YRCS…LKTH), 331–352 (KKCP…RKIH), 358–380 (YQCD…ARIH), 386–408 (YECP…QKYH), 414–436 (YRCE…NLVH), 442–464 (FACT…SNIH), and 470–493 (FKCN…RRRH). 2 disordered regions span residues 554 to 573 (TSTA…QPQQ) and 617 to 652 (PKQT…SSLE). The span at 630–648 (APKQLQQKPQLLQQGQPQQ) shows a compositional bias: low complexity.

As to expression, distribution varies between nurse cells and the oocyte during oogenesis. Weakly expressed in follicle and border cells.

The protein resides in the nucleus. May belong to a complex set of multifingered proteins which play an important role in gene activation or regulation at early embryonic stages through a maximal accumulation of their transcripts (or protein product) in the mature oocyte. This chain is Serendipity locus protein H-1 (wdn), found in Drosophila melanogaster (Fruit fly).